The primary structure comprises 386 residues: 1-deoxy-D-xylulose 5-phosphate reductoisomerase (386 aa).

NADPH contacts are provided by serine 10, glycine 11, serine 12, valine 13, asparagine 38, and asparagine 120. Lysine 121 provides a ligand contact to 1-deoxy-D-xylulose 5-phosphate. Residue glutamate 122 coordinates NADPH. Aspartate 146 is a Mn(2+) binding site. Residues serine 147, glutamate 148, serine 172, and histidine 195 each coordinate 1-deoxy-D-xylulose 5-phosphate. A Mn(2+)-binding site is contributed by glutamate 148. An NADPH-binding site is contributed by glycine 201. Serine 208, asparagine 213, lysine 214, and glutamate 217 together coordinate 1-deoxy-D-xylulose 5-phosphate. Glutamate 217 is a binding site for Mn(2+).

The protein belongs to the DXR family. The cofactor is Mg(2+). Mn(2+) is required as a cofactor.

It catalyses the reaction 2-C-methyl-D-erythritol 4-phosphate + NADP(+) = 1-deoxy-D-xylulose 5-phosphate + NADPH + H(+). It participates in isoprenoid biosynthesis; isopentenyl diphosphate biosynthesis via DXP pathway; isopentenyl diphosphate from 1-deoxy-D-xylulose 5-phosphate: step 1/6. Its function is as follows. Catalyzes the NADPH-dependent rearrangement and reduction of 1-deoxy-D-xylulose-5-phosphate (DXP) to 2-C-methyl-D-erythritol 4-phosphate (MEP). The chain is 1-deoxy-D-xylulose 5-phosphate reductoisomerase from Leptospira biflexa serovar Patoc (strain Patoc 1 / Ames).